The following is a 138-amino-acid chain: Lutropin subunit beta (138 aa).

Positions 1 to 17 are cleaved as a signal peptide; it reads LQGLLLWLLLSVGGVWA. Intrachain disulfides connect C26/C74, C40/C89, C43/C127, C51/C105, C55/C107, and C110/C117. N30 is a glycosylation site (N-linked (GlcNAc...) asparagine).

Belongs to the glycoprotein hormones subunit beta family. Heterodimer of a common alpha chain and a unique beta chain which confers biological specificity to thyrotropin, lutropin, follitropin and gonadotropin.

Its subcellular location is the secreted. Promotes spermatogenesis and ovulation by stimulating the testes and ovaries to synthesize steroids. The chain is Lutropin subunit beta (LHB) from Canis lupus familiaris (Dog).